Consider the following 360-residue polypeptide: MNAPVGGIWLWLPLLLTWLSPEVSSSWWYMKATGGSSRVMCDNVPGLVSRQRQLCHRHPDVMRAIGLGVAEWTAECQHQFRQHRWNCNTLDRDHSLFGRVLLRSSRESAFVYAISSAGVVFAVTRACSQGELKSCSCDPKKKGTAKDSKGTFDWGGCSDNIDYGIKFARAFVDAKERKGKDARALMNVHNNRAGRKAVKRFLKQECKCHGVSGSCTLRTCWLAMADFRKTGDYLWRRYNGAIQVVMNQDGTGFTVANKRFKKPTKNDLVYFENSPDYCIRDRDAGSLGTAGRVCNLTSRGMDSCEVMCCGRGYDTSRVTRMTKCECKFHWCCAVRCQDCLEALDVHTCKAPKSADWAAPT.

Residues 1–25 form the signal peptide; sequence MNAPVGGIWLWLPLLLTWLSPEVSS. 11 cysteine pairs are disulfide-bonded: Cys76–Cys87, Cys127–Cys135, Cys137–Cys157, Cys206–Cys220, Cys208–Cys215, Cys278–Cys309, Cys294–Cys304, Cys308–Cys348, Cys324–Cys339, Cys326–Cys336, and Cys331–Cys332. Ser212 carries the O-palmitoleoyl serine; by PORCN lipid modification. Asn295 carries N-linked (GlcNAc...) asparagine glycosylation.

This sequence belongs to the Wnt family. In terms of processing, palmitoleoylation is required for efficient binding to frizzled receptors. Depalmitoleoylation leads to Wnt signaling pathway inhibition.

It localises to the secreted. The protein resides in the extracellular space. The protein localises to the extracellular matrix. Its function is as follows. Ligand for members of the frizzled family of seven transmembrane receptors. Probable developmental protein. May be a signaling molecule which affects the development of discrete regions of tissues. Is likely to signal over only few cell diameters. The polypeptide is Protein Wnt-2 (WNT2) (Rhinolophus ferrumequinum (Greater horseshoe bat)).